A 548-amino-acid polypeptide reads, in one-letter code: Glucose-6-phosphate isomerase 1 (548 aa).

The active-site Proton donor is the Glu-353. Residues His-384 and Lys-512 contribute to the active site.

This sequence belongs to the GPI family.

It is found in the cytoplasm. The enzyme catalyses alpha-D-glucose 6-phosphate = beta-D-fructose 6-phosphate. The protein operates within carbohydrate biosynthesis; gluconeogenesis. Its pathway is carbohydrate degradation; glycolysis; D-glyceraldehyde 3-phosphate and glycerone phosphate from D-glucose: step 2/4. Catalyzes the reversible isomerization of glucose-6-phosphate to fructose-6-phosphate. The sequence is that of Glucose-6-phosphate isomerase 1 from Neisseria gonorrhoeae (strain ATCC 700825 / FA 1090).